The sequence spans 82 residues: Escargot/snail protein homolog (82 aa).

4 consecutive C2H2-type zinc fingers follow at residues 1–5 (HQQFH), 18–40 (FSCKNCDKTYVSLGALKMHIRTH), 44–66 (CKCPICGKAFSRPWLLQGHIRTH), and 72–82 (FSCQHCQSAFV).

The protein belongs to the snail C2H2-type zinc-finger protein family.

Its subcellular location is the nucleus. This chain is Escargot/snail protein homolog, found in Calliphora vicina (Blue blowfly).